A 246-amino-acid chain; its full sequence is 1-(5-phosphoribosyl)-5-[(5-phosphoribosylamino)methylideneamino] imidazole-4-carboxamide isomerase (246 aa).

Asp8 serves as the catalytic Proton acceptor. Asp131 functions as the Proton donor in the catalytic mechanism.

It belongs to the HisA/HisF family.

The protein resides in the cytoplasm. The enzyme catalyses 1-(5-phospho-beta-D-ribosyl)-5-[(5-phospho-beta-D-ribosylamino)methylideneamino]imidazole-4-carboxamide = 5-[(5-phospho-1-deoxy-D-ribulos-1-ylimino)methylamino]-1-(5-phospho-beta-D-ribosyl)imidazole-4-carboxamide. Its pathway is amino-acid biosynthesis; L-histidine biosynthesis; L-histidine from 5-phospho-alpha-D-ribose 1-diphosphate: step 4/9. The protein is 1-(5-phosphoribosyl)-5-[(5-phosphoribosylamino)methylideneamino] imidazole-4-carboxamide isomerase of Bordetella avium (strain 197N).